We begin with the raw amino-acid sequence, 310 residues long: L-lactate dehydrogenase (310 aa).

Residues 10-11 (MV), Asp-32, Tyr-62, and 76-77 (GV) contribute to the NAD(+) site. Substrate is bound by residues Gln-79, Arg-85, and 117–120 (NPVD). Residues 115-117 (ATN) and Ser-140 each bind NAD(+). Residue 145 to 148 (DTAR) participates in substrate binding. Residues Arg-150 and 162-167 (QSVHAY) contribute to the beta-D-fructose 1,6-bisphosphate site. His-172 (proton acceptor) is an active-site residue. Tyr-218 is subject to Phosphotyrosine. Thr-227 lines the substrate pocket.

The protein belongs to the LDH/MDH superfamily. LDH family. Homotetramer.

It is found in the cytoplasm. The enzyme catalyses (S)-lactate + NAD(+) = pyruvate + NADH + H(+). It participates in fermentation; pyruvate fermentation to lactate; (S)-lactate from pyruvate: step 1/1. Its activity is regulated as follows. Allosterically activated by fructose 1,6-bisphosphate (FBP). It binds two fructose 1,6-bisphosphate (FBP) molecules per tetramer. Catalyzes the conversion of lactate to pyruvate. The protein is L-lactate dehydrogenase of Thermus caldophilus.